The chain runs to 1148 residues: Putative ATP-dependent RNA helicase rha-2 (1148 aa).

The segment covering M1 to N10 has biased composition (basic and acidic residues). Disordered regions lie at residues M1–E51 and S101–N163. The segment covering P138–D160 has biased composition (acidic residues). Residues V246 to V412 enclose the Helicase ATP-binding domain. G259–T266 serves as a coordination point for ATP. Positions D355–H358 match the DEAH box motif. The region spanning E463–N703 is the Helicase C-terminal domain.

The protein belongs to the DEAD box helicase family. DEAH subfamily.

The catalysed reaction is ATP + H2O = ADP + phosphate + H(+). Probable ATP-binding RNA helicase. This is Putative ATP-dependent RNA helicase rha-2 (rha-2) from Caenorhabditis elegans.